Reading from the N-terminus, the 276-residue chain is 2-dehydro-3-deoxyphosphooctonate aldolase (276 aa).

The protein belongs to the KdsA family.

The protein localises to the cytoplasm. It carries out the reaction D-arabinose 5-phosphate + phosphoenolpyruvate + H2O = 3-deoxy-alpha-D-manno-2-octulosonate-8-phosphate + phosphate. It participates in carbohydrate biosynthesis; 3-deoxy-D-manno-octulosonate biosynthesis; 3-deoxy-D-manno-octulosonate from D-ribulose 5-phosphate: step 2/3. It functions in the pathway bacterial outer membrane biogenesis; lipopolysaccharide biosynthesis. This is 2-dehydro-3-deoxyphosphooctonate aldolase from Xylella fastidiosa (strain 9a5c).